The following is a 162-amino-acid chain: NADH-quinone oxidoreductase subunit I 2 (162 aa).

4Fe-4S ferredoxin-type domains lie at 53–83 (LRRYPNGEERCIACKLCEAVCPALAITIDSE) and 93–122 (TRYDIDLFKCIYCGFCEESCPVDSIVETRI). Residues C63, C66, C69, C73, C102, C105, C108, and C112 each coordinate [4Fe-4S] cluster.

It belongs to the complex I 23 kDa subunit family. NDH-1 is composed of 14 different subunits. Subunits NuoA, H, J, K, L, M, N constitute the membrane sector of the complex. It depends on [4Fe-4S] cluster as a cofactor.

The protein localises to the cell inner membrane. The catalysed reaction is a quinone + NADH + 5 H(+)(in) = a quinol + NAD(+) + 4 H(+)(out). NDH-1 shuttles electrons from NADH, via FMN and iron-sulfur (Fe-S) centers, to quinones in the respiratory chain. The immediate electron acceptor for the enzyme in this species is believed to be ubiquinone. Couples the redox reaction to proton translocation (for every two electrons transferred, four hydrogen ions are translocated across the cytoplasmic membrane), and thus conserves the redox energy in a proton gradient. The sequence is that of NADH-quinone oxidoreductase subunit I 2 from Nitrosococcus oceani (strain ATCC 19707 / BCRC 17464 / JCM 30415 / NCIMB 11848 / C-107).